Consider the following 236-residue polypeptide: Cysteine-rich venom protein TRI1 (236 aa).

An N-terminal signal peptide occupies residues methionine 1–glycine 18. The region spanning valine 37–tyrosine 165 is the SCP domain. Intrachain disulfides connect cysteine 74/cysteine 152, cysteine 91/cysteine 166, cysteine 147/cysteine 163, cysteine 185/cysteine 192, cysteine 188/cysteine 197, cysteine 201/cysteine 234, cysteine 210/cysteine 228, and cysteine 219/cysteine 232. The ShKT domain maps to cysteine 201–cysteine 234.

This sequence belongs to the CRISP family. In terms of tissue distribution, expressed by the venom gland.

The protein resides in the secreted. Functionally, blocks contraction of smooth muscle elicited by high potassium-induced depolarization, but does not block caffeine-stimulated contraction. May target voltage-gated calcium channels on smooth muscle. The sequence is that of Cysteine-rich venom protein TRI1 from Trimorphodon biscutatus (Western lyre snake).